The following is a 429-amino-acid chain: 4-hydroxy-3-methylbut-2-en-1-yl diphosphate synthase (flavodoxin) (429 aa).

Residues cysteine 317, cysteine 320, cysteine 363, and glutamate 370 each contribute to the [4Fe-4S] cluster site.

This sequence belongs to the IspG family. Requires [4Fe-4S] cluster as cofactor.

It carries out the reaction (2E)-4-hydroxy-3-methylbut-2-enyl diphosphate + oxidized [flavodoxin] + H2O + 2 H(+) = 2-C-methyl-D-erythritol 2,4-cyclic diphosphate + reduced [flavodoxin]. It functions in the pathway isoprenoid biosynthesis; isopentenyl diphosphate biosynthesis via DXP pathway; isopentenyl diphosphate from 1-deoxy-D-xylulose 5-phosphate: step 5/6. Functionally, converts 2C-methyl-D-erythritol 2,4-cyclodiphosphate (ME-2,4cPP) into 1-hydroxy-2-methyl-2-(E)-butenyl 4-diphosphate. This Deinococcus radiodurans (strain ATCC 13939 / DSM 20539 / JCM 16871 / CCUG 27074 / LMG 4051 / NBRC 15346 / NCIMB 9279 / VKM B-1422 / R1) protein is 4-hydroxy-3-methylbut-2-en-1-yl diphosphate synthase (flavodoxin).